Consider the following 142-residue polypeptide: Hemoglobin subunit zeta (142 aa).

S2 is subject to N-acetylserine. The region spanning 2–142 is the Globin domain; the sequence is SLMKNERAII…LSSILTEKYR (141 aa). Phosphothreonine is present on T29. S53 bears the Phosphoserine mark. Residue H59 participates in heme b binding. Phosphoserine is present on S73. H88 contacts heme b.

The protein belongs to the globin family. As to quaternary structure, heterotetramer of two zeta chains and beta-type chains.

Functionally, the zeta chain is an alpha-type chain of mammalian embryonic hemoglobin. The sequence is that of Hemoglobin subunit zeta (Hbz) from Mus musculus (Mouse).